The primary structure comprises 257 residues: Small ribosomal subunit protein uS15m (257 aa).

A mitochondrion-targeting transit peptide spans 1 to 57 (MLRVAWRTLSLIRTRAVTQVLVPGLPGGGSAKFPFNQWGLQPRSLLLQAARGYVVRK). Residues 225 to 257 (RALKAAAAAQKQAKRRNPDSPAKAIPKTLKDSQ) form a disordered region.

This sequence belongs to the universal ribosomal protein uS15 family. Component of the mitochondrial small ribosomal subunit (mt-SSU). Mature mammalian 55S mitochondrial ribosomes consist of a small (28S) and a large (39S) subunit. The 28S small subunit contains a 12S ribosomal RNA (12S mt-rRNA) and 30 different proteins. The 39S large subunit contains a 16S rRNA (16S mt-rRNA), a copy of mitochondrial valine transfer RNA (mt-tRNA(Val)), which plays an integral structural role, and 52 different proteins. Interacts with METTL17.

It localises to the mitochondrion matrix. The protein is Small ribosomal subunit protein uS15m (MRPS15) of Homo sapiens (Human).